The primary structure comprises 1455 residues: Membrane-associated guanylate kinase, WW and PDZ domain-containing protein 2 (1455 aa).

One can recognise a PDZ 1 domain in the interval 17-101 (ESVIGRNPEG…PLRLKCVKQG (85 aa)). Residues 109-283 (RHYLNLRFQK…APVYSQPEEL (175 aa)) form the Guanylate kinase-like domain. A disordered region spans residues 205 to 306 (PGATPSAEGK…DNEEPDPLPD (102 aa)). The segment covering 241–252 (VVNGNGVVVTPE) has biased composition (low complexity). The segment covering 281-296 (EELKEQMDDTKPTKPE) has biased composition (basic and acidic residues). WW domains lie at 302 to 335 (DPLP…DPRL) and 348 to 381 (NELP…NPVL). Positions 302 to 381 (DPLPDNWEMA…RRTQFENPVL (80 aa)) are interaction with DDN. Tyr362 is modified (phosphotyrosine). PDZ domains are found at residues 426-510 (STTL…CRGY) and 605-683 (TLTI…HRGG). Phosphoserine is present on Ser686. Residues 778 to 860 (DVHLRRMESG…NGQVNLTVRR (83 aa)) form the PDZ 4 domain. At Tyr827 the chain carries Phosphotyrosine. Positions 869–913 (CPENGRSPGSVSTHHSSPRSDYATYTNSNHAAPSSNASPPEGFAS) are disordered. Residues Ser884 and Ser885 each carry the phosphoserine modification. A compositionally biased stretch (low complexity) spans 895-908 (NSNHAAPSSNASPP). One can recognise a PDZ 5 domain in the interval 920–1010 (DVVIHRKENE…SVTLRIIPQE (91 aa)). Over residues 1011 to 1040 (ELNSPTSAPSSEKQSPMAQQSPLAQQSPLA) the composition is skewed to polar residues. A disordered region spans residues 1011 to 1136 (ELNSPTSAPS…PDTRQYPLSD (126 aa)). Ser1014 carries the phosphoserine modification. Basic and acidic residues predominate over residues 1067 to 1083 (NSYRSEVKARQDVKPDI). The 83-residue stretch at 1147 to 1229 (TVDMEKGAKG…RVRLLLKRGT (83 aa)) folds into the PDZ 6 domain. The disordered stretch occupies residues 1231–1455 (QVPEYDEPAP…LKPGASAASR (225 aa)). Residues 1238–1249 (PAPWSSPAAAAP) show a composition bias toward low complexity. Residues 1287-1299 (DIKREHDVRKPKE) are compositionally biased toward basic and acidic residues. Composition is skewed to low complexity over residues 1346 to 1363 (EARA…AARA), 1399 to 1412 (ALEA…RAGP), and 1422 to 1433 (APARKAAVAPGP).

This sequence belongs to the MAGUK family. As to quaternary structure, interacts (via its WW domains) with DRPLA. Interacts (via its second PDZ domain) with PTEN (via unphosphorylated C-terminus); this interaction diminishes the degradation rate of PTEN. Interacts (via guanylate kinase domain) with DLGAP1. Interacts (via the PDZ domains) with GRIN2A, GRID2 and NLGN1. Interacts with CTNND2, CTNNB1, MAGUIN-1, ACVR2A, SMAD2 and SMAD3. Part of a complex consisting of MAGI2/ARIP1, ACVR2A, ACVR1B and SMAD3. May interact with HTR2A. Interacts with IGSF9, RAPGEF2 and HTR4. Identified in a complex with ACTN4, CASK, IQGAP1, NPHS1, SPTAN1 and SPTBN1. Found in a complex, at least composed of KIDINS220, MAGI2, NTRK1 and RAPGEF2; the complex is mainly formed at late endosomes in a NGF-dependent manner. Interacts with RAPGEF2; the interaction occurs before or after nerve growth factor (NGF) stimulation. Interacts (via PDZ domain) with KIDINS220 (via C-terminal domain). Interacts with DDN. Interacts with DLL1. Found in a complex with IGSF9B and NLGN2; the interaction with IGSF9B is mediated via the PDZ 5 and PDZ 6 domains, while the interaction with NLGN2 is mediated via the WW1, WW2 and PDZ2 domains. Interacts (via PDZ 6 domain) with USH1G (via SAM domain); the interaction is triggered by phosphorylation of USH1G by CK2 and negatively regulates MAGI2-mediated endocytosis. Specifically expressed in brain.

It localises to the cytoplasm. It is found in the late endosome. The protein resides in the synapse. The protein localises to the synaptosome. Its subcellular location is the cell membrane. It localises to the cytoskeleton. It is found in the microtubule organizing center. The protein resides in the centrosome. The protein localises to the cell projection. Its subcellular location is the cilium. It localises to the centriole. It is found in the photoreceptor inner segment. The protein resides in the photoreceptor outer segment. In terms of biological role, seems to act as a scaffold molecule at synaptic junctions by assembling neurotransmitter receptors and cell adhesion proteins. Plays a role in nerve growth factor (NGF)-induced recruitment of RAPGEF2 to late endosomes and neurite outgrowth. May play a role in regulating activin-mediated signaling in neuronal cells. Enhances the ability of PTEN to suppress AKT1 activation. Plays a role in receptor-mediated clathrin-dependent endocytosis which is required for ciliogenesis. The polypeptide is Membrane-associated guanylate kinase, WW and PDZ domain-containing protein 2 (MAGI2) (Homo sapiens (Human)).